Here is a 354-residue protein sequence, read N- to C-terminus: P2Y purinoceptor 13 (354 aa).

The Extracellular segment spans residues 1–49 (MTAAIRRQRELSILPKVTLEAMNTTVMQGFNRSERCPRDTRIVQLVFPA). Residues asparagine 23 and asparagine 31 are each glycosylated (N-linked (GlcNAc...) asparagine). A helical transmembrane segment spans residues 50–70 (LYTVVFLTGILLNTLALWVFV). Residues 71-77 (HIPSSST) lie on the Cytoplasmic side of the membrane. The helical transmembrane segment at 78 to 98 (FIIYLKNTLVADLIMTLMLPF) threads the bilayer. Residues 99–117 (KILSDSHLAPWQLRAFVCR) are Extracellular-facing. A disulfide bridge links cysteine 116 with cysteine 194. Residues 118 to 138 (FSSVIFYETMYVGIVLLGLIA) form a helical membrane-spanning segment. At 139-161 (FDRFLKIIRPLRNIFLKKPVFAK) the chain is on the cytoplasmic side. Residues 162-182 (TVSIFIWFFLFFISLPNTILS) form a helical membrane-spanning segment. Residues 183–211 (NKEATPSSVKKCASLKGPLGLKWHQMVNN) are Extracellular-facing. The chain crosses the membrane as a helical span at residues 212–232 (ICQFIFWTVFILMLVFYVVIA). The Cytoplasmic segment spans residues 233–252 (KKVYDSYRKSKSKDRKNNKK). Residues 253–273 (LEGKVFVVVAVFFVCFAPFHF) form a helical membrane-spanning segment. Topologically, residues 274–300 (ARVPYTHSQTNNKTDCRLQNQLFIAKE) are extracellular. Asparagine 285 carries an N-linked (GlcNAc...) asparagine glycan. Residues 301-321 (TTLFLAATNICMDPLIYIFLC) traverse the membrane as a helical segment. The Cytoplasmic segment spans residues 322–333 (KKFTEKLPCMQG). The interval 335–354 (KTTASSQENHSSQTDNITLG) is disordered.

The protein belongs to the G-protein coupled receptor 1 family. In terms of tissue distribution, strong expression in spleen and adult brain. Lower expression in placenta, lung, liver, spinal cord, thymus, small intestine, uterus, stomach, testis, fetal brain, and adrenal gland. Not detected in pancreas, heart, kidney, skeletal muscle, ovary or fetal aorta. Clearly detected in lymph node and bone marrow, weakly detected in peripheral blood mononuclear cells (PBMC) and in peripheral blood leukocytes (PBL), but not detected in polymorphonuclear cells (PMN). In the brain, detected in all brain regions examined.

It localises to the cell membrane. In terms of biological role, receptor for ADP. Coupled to G(i)-proteins. May play a role in hematopoiesis and the immune system. The polypeptide is P2Y purinoceptor 13 (P2RY13) (Homo sapiens (Human)).